The primary structure comprises 316 residues: Pantothenate kinase (316 aa).

An ATP-binding site is contributed by 95–102 (GSVAVGKS).

The protein belongs to the prokaryotic pantothenate kinase family.

Its subcellular location is the cytoplasm. It carries out the reaction (R)-pantothenate + ATP = (R)-4'-phosphopantothenate + ADP + H(+). Its pathway is cofactor biosynthesis; coenzyme A biosynthesis; CoA from (R)-pantothenate: step 1/5. The chain is Pantothenate kinase from Shewanella sediminis (strain HAW-EB3).